The primary structure comprises 1382 residues: Hepatocyte growth factor receptor (1382 aa).

The N-terminal stretch at 1 to 24 (MKASAVLAPGILALLFTLVQGSDG) is a signal peptide. Topologically, residues 25–935 (ECHEALAKSE…VQPDQNFTGL (911 aa)) are extracellular. Residues 27-516 (HEALAKSEMN…TGKRITKIPL (490 aa)) enclose the Sema domain. N-linked (GlcNAc...) asparagine glycosylation is found at N45, N100, and N106. 4 disulfide bridges follow: C95-C101, C98-C160, C133-C141, and C173-C176. N-linked (GlcNAc...) asparagine glycans are attached at residues N203 and N359. Disulfide bonds link C299–C364 and C386–C398. Residues N400 and N406 are each glycosylated (N-linked (GlcNAc...) asparagine). 4 disulfide bridges follow: C521/C539, C527/C562, C530/C546, and C542/C552. IPT/TIG domains are found at residues 564–656 (PAIH…FSYV), 658–740 (PVIT…FSYQ), and 743–837 (PVVY…LIYV). T583 carries an O-linked (Man) threonine glycan. N-linked (GlcNAc...) asparagine glycans are attached at residues N608 and N636. T677 and T762 each carry an O-linked (Man) threonine glycan. N-linked (GlcNAc...) asparagine glycosylation is found at N786, N880, and N931. The chain crosses the membrane as a helical span at residues 936–956 (IVGVVSISIILLLLLGLFLWM). The Cytoplasmic segment spans residues 957 to 1382 (KKRKQIKDLG…QDNINGEVDT (426 aa)). S967 carries the phosphoserine modification. Position 978 is a phosphothreonine (T978). A phosphoserine mark is found at S991, S998, and S1001. Residue Y1004 is modified to Phosphotyrosine. Residues 1079–1346 (VHFNEVIGRG…RISAIFSTFI (268 aa)) enclose the Protein kinase domain. ATP-binding positions include 1085–1093 (IGRGHFGCV) and K1111. D1205 functions as the Proton acceptor in the catalytic mechanism. The segment at 1213–1382 (LDEKFTVKVA…QDNINGEVDT (170 aa)) is interaction with RANBP9. Y1231 carries the phosphotyrosine modification. Residues Y1235 and Y1236 each carry the phosphotyrosine; by autocatalysis modification. At T1290 the chain carries Phosphothreonine. Residues 1321-1360 (WHPKAEMRPSFSELVSRISAIFSTFIGEHYVHVNATYVNV) form an interaction with MUC20 region. Phosphotyrosine; by autocatalysis occurs at positions 1350 and 1357. Y1366 carries the phosphotyrosine modification.

It belongs to the protein kinase superfamily. Tyr protein kinase family. As to quaternary structure, heterodimer made of an alpha chain (50 kDa) and a beta chain (145 kDa) which are disulfide linked. Binds PLXNB1. Interacts when phosphorylated with downstream effectors including STAT3, PIK3R1, SRC, PCLG1, GRB2 and GAB1. Interacts with SPSB1, SPSB2 and SPSB4. Interacts with INPP5D/SHIP1. When phosphorylated at Tyr-1357, interacts with INPPL1/SHIP2. Interacts with RANBP9 and RANBP10, as well as SPSB1, SPSB2, SPSB3 and SPSB4. SPSB1 binding occurs in the presence and in the absence of HGF, however HGF treatment has a positive effect on this interaction. Interacts with MUC20; prevents interaction with GRB2 and suppresses hepatocyte growth factor-induced cell proliferation. Interacts with GRB10. Interacts with PTPN1 and PTPN2. Interacts with HSP90AA1 and HSP90AB1; the interaction suppresses MET kinase activity. Interacts with tensin TNS3. Interacts (when phosphorylated) with tensin TNS4 (via SH2 domain); the interaction increases MET protein stability by inhibiting MET endocytosis and subsequent lysosomal degradation. Autophosphorylated in response to ligand binding on Tyr-1235 and Tyr-1236 in the kinase domain leading to further phosphorylation of Tyr-1350 and Tyr-1357 in the C-terminal multifunctional docking site. Dephosphorylated by PTPRJ at Tyr-1350 and Tyr-1366. Dephosphorylated by PTPN1 and PTPN2. In terms of processing, ubiquitinated. Ubiquitination by CBL regulates the receptor stability and activity through proteasomal degradation. Post-translationally, O-mannosylation of IPT/TIG domains by TMEM260 is required for protein maturation. O-mannosylated residues are composed of single mannose glycans that are not elongated or modified.

It localises to the membrane. It carries out the reaction L-tyrosyl-[protein] + ATP = O-phospho-L-tyrosyl-[protein] + ADP + H(+). In its inactive state, the C-terminal tail interacts with the catalytic domain and inhibits the kinase activity. Upon ligand binding, the C-terminal tail is displaced and becomes phosphorylated, thus increasing the kinase activity. Its function is as follows. Receptor tyrosine kinase that transduces signals from the extracellular matrix into the cytoplasm by binding to hepatocyte growth factor/HGF ligand. Regulates many physiological processes including proliferation, scattering, morphogenesis and survival. Ligand binding at the cell surface induces autophosphorylation of MET on its intracellular domain that provides docking sites for downstream signaling molecules. Following activation by ligand, interacts with the PI3-kinase subunit PIK3R1, PLCG1, SRC, GRB2, STAT3 or the adapter GAB1. Recruitment of these downstream effectors by MET leads to the activation of several signaling cascades including the RAS-ERK, PI3 kinase-AKT, or PLCgamma-PKC. The RAS-ERK activation is associated with the morphogenetic effects while PI3K/AKT coordinates prosurvival effects. During embryonic development, MET signaling plays a role in gastrulation, development and migration of muscles and neuronal precursors, angiogenesis and kidney formation. In adults, participates in wound healing as well as organ regeneration and tissue remodeling. Also promotes differentiation and proliferation of hematopoietic cells. In Microcebus murinus (Gray mouse lemur), this protein is Hepatocyte growth factor receptor (MET).